We begin with the raw amino-acid sequence, 88 residues long: Small ribosomal subunit protein eS21 (88 aa).

The protein belongs to the eukaryotic ribosomal protein eS21 family. In terms of assembly, component of the 40S small ribosomal subunit.

The protein resides in the cytoplasm. Its subcellular location is the cytosol. The protein localises to the rough endoplasmic reticulum. In Caenorhabditis elegans, this protein is Small ribosomal subunit protein eS21 (rps-21).